We begin with the raw amino-acid sequence, 511 residues long: ATP synthase subunit alpha (511 aa).

ATP is bound at residue Gly169 to Thr176.

Belongs to the ATPase alpha/beta chains family. F-type ATPases have 2 components, CF(1) - the catalytic core - and CF(0) - the membrane proton channel. CF(1) has five subunits: alpha(3), beta(3), gamma(1), delta(1), epsilon(1). CF(0) has three main subunits: a(1), b(2) and c(9-12). The alpha and beta chains form an alternating ring which encloses part of the gamma chain. CF(1) is attached to CF(0) by a central stalk formed by the gamma and epsilon chains, while a peripheral stalk is formed by the delta and b chains.

Its subcellular location is the cell membrane. The enzyme catalyses ATP + H2O + 4 H(+)(in) = ADP + phosphate + 5 H(+)(out). Its function is as follows. Produces ATP from ADP in the presence of a proton gradient across the membrane. The alpha chain is a regulatory subunit. The polypeptide is ATP synthase subunit alpha (Latilactobacillus sakei subsp. sakei (strain 23K) (Lactobacillus sakei subsp. sakei)).